We begin with the raw amino-acid sequence, 922 residues long: NEDD4-like E3 ubiquitin-protein ligase WWP1 (922 aa).

Residues 1-116 (MATASPRSDT…IHNRKLERVK (116 aa)) form the C2 domain. Polar residues-rich tracts occupy residues 210 to 219 (GDNTPSSPSQ), 243 to 278 (NGES…STTV), 286 to 302 (ILTS…TSAE), 314 to 323 (DTSNSRSSSA), and 340 to 351 (RQQSGNANTETL). The segment at 210–388 (GDNTPSSPSQ…RPQPLPPGWE (179 aa)) is disordered. WW domains lie at 349-382 (ETLP…RPQP), 381-414 (QPLP…RPTM), 456-489 (GPLP…DPRT), and 496-529 (EPLP…DPRN). Residues 349-531 (ETLPSGWEQR…TTFKDPRNGK (183 aa)) form a required for interaction with and ubiquitination of AMOTL2. Required for interaction with YAP1 region. The 335-residue stretch at 588–922 (KPYDLRRRLY…IEETEGFGQE (335 aa)) folds into the HECT domain. C890 serves as the catalytic Glycyl thioester intermediate.

As to quaternary structure, interacts with the Crumbs complex components PALS1 and PATJ; interaction with the Crumbs complex is enhanced by WWP1's interaction with AMOTL2 and facilitates WWP1 localization to the plasma membrane. Interaction with the Crumbs complex promotes WWP1 monoubiquitination of AMOTL2, which activates the Hippo signaling pathway. Binds KLF2 and HIVEP3. Binds SCNN1A, SCNN1B, SCNN1G, WBP1, WBP2, DRPLA and adenovirus type 2 PIII. Interacts with RNF11. Interacts with SPART. Interacts with ERBB4 isoforms JM-B CYT-1 and JM-A CYT-1. Interacts with SMAD1, SMAD2, SMAD3, SMAD5, SMAD6, SMAD7, TGFBR1 and TGFBR2. Associates with the TGFBR1:TGFBR2 receptor complex in presence of SMAD7. Interacts with SKIL isoform 1. Interacts with TP63 isoform 1 and isoform 2. Interacts with STAMBP and RNF11. Interacts with NDFIP1 and NDFIP2; this interaction activates the E3 ubiquitin-protein ligase. Interacts with TGIF. Interacts (via WW domains) with ARRDC1, ARRDC2 and ARRDC3. (Microbial infection) Interacts with HTLV-1 protein Gag. In terms of assembly, (Microbial infection) Interacts with ebola virus protein VP40. In terms of processing, auto-ubiquitinated and ubiquitinated by RNF11. In terms of tissue distribution, detected in heart, placenta, pancreas, kidney, liver, skeletal muscle, bone marrow, fetal brain, and at much lower levels in adult brain and lung. Isoform 1 and isoform 5 predominate in all tissues tested, except in testis and bone marrow, where isoform 5 is expressed at much higher levels than isoform 1.

It is found in the cytoplasm. The protein localises to the cell membrane. The protein resides in the nucleus. It localises to the cell junction. The enzyme catalyses S-ubiquitinyl-[E2 ubiquitin-conjugating enzyme]-L-cysteine + [acceptor protein]-L-lysine = [E2 ubiquitin-conjugating enzyme]-L-cysteine + N(6)-ubiquitinyl-[acceptor protein]-L-lysine.. It functions in the pathway protein modification; protein ubiquitination. With respect to regulation, activated by NDFIP1- and NDFIP2-binding. In terms of biological role, E3 ubiquitin-protein ligase which accepts ubiquitin from an E2 ubiquitin-conjugating enzyme in the form of a thioester and then directly transfers the ubiquitin to targeted substrates. Ubiquitinates ERBB4 isoforms JM-A CYT-1 and JM-B CYT-1, KLF2, KLF5 and TP63 and promotes their proteasomal degradation. Ubiquitinates RNF11 without targeting it for degradation. Ubiquitinates and promotes degradation of TGFBR1; the ubiquitination is enhanced by SMAD7. Ubiquitinates SMAD6 and SMAD7. Ubiquitinates and promotes degradation of SMAD2 in response to TGF-beta signaling, which requires interaction with TGIF. Activates the Hippo signaling pathway in response to cell contact inhibition and recruitment to the Crumbs complex at the cell membrane. Monoubiquitinates AMOTL2 which facilitates its interaction with and activation of LATS2. LATS2 then phosphorylates YAP1, excluding it from the nucleus and therefore ultimately represses YAP1-driven transcription of target genes. In Homo sapiens (Human), this protein is NEDD4-like E3 ubiquitin-protein ligase WWP1 (WWP1).